The sequence spans 118 residues: Thioredoxin H-type 2 (118 aa).

In terms of domain architecture, Thioredoxin spans Ala-2 to Ser-113. Catalysis depends on nucleophile residues Cys-39 and Cys-42. Cys-39 and Cys-42 are disulfide-bonded.

Belongs to the thioredoxin family. Plant H-type subfamily.

It localises to the cytoplasm. Participates in various redox reactions through the reversible oxidation of the active center dithiol to a disulfide. The H form is known to activate a number of cytosolic enzymes. The protein is Thioredoxin H-type 2 of Nicotiana tabacum (Common tobacco).